We begin with the raw amino-acid sequence, 210 residues long: 7-methyl-GTP pyrophosphatase (210 aa).

Catalysis depends on D79, which acts as the Proton acceptor.

This sequence belongs to the Maf family. YceF subfamily. Requires a divalent metal cation as cofactor.

The protein resides in the cytoplasm. The enzyme catalyses N(7)-methyl-GTP + H2O = N(7)-methyl-GMP + diphosphate + H(+). Nucleoside triphosphate pyrophosphatase that hydrolyzes 7-methyl-GTP (m(7)GTP). May have a dual role in cell division arrest and in preventing the incorporation of modified nucleotides into cellular nucleic acids. The chain is 7-methyl-GTP pyrophosphatase from Burkholderia orbicola (strain AU 1054).